The chain runs to 121 residues: Small ribosomal subunit protein bS16 (121 aa).

Residues 97–114 (LAKAKTKDEENDNSKVES) are compositionally biased toward basic and acidic residues. The segment at 97–121 (LAKAKTKDEENDNSKVESEGNEAES) is disordered.

It belongs to the bacterial ribosomal protein bS16 family.

The sequence is that of Small ribosomal subunit protein bS16 from Prochlorococcus marinus (strain AS9601).